The following is a 276-amino-acid chain: Putative pyridoxine kinase (276 aa).

Residue N139 coordinates ATP. E142 provides a ligand contact to Mg(2+). ATP is bound by residues 176-180, D188, G213, and K238; that span reads KGGKA.

The protein belongs to the ThiD family.

The catalysed reaction is pyridoxal + ATP = pyridoxal 5'-phosphate + ADP + H(+). Its function is as follows. Phosphorylates B6 vitamers; functions in a salvage pathway. Uses pyridoxal, pyridoxine, and pyridoxamine as substrates. This Staphylococcus epidermidis (strain ATCC 12228 / FDA PCI 1200) protein is Putative pyridoxine kinase (pdxK).